We begin with the raw amino-acid sequence, 106 residues long: Large ribosomal subunit protein P1 (106 aa).

The disordered stretch occupies residues 69 to 106 (AAAAAPAEEAKEEAKEEEEEEEEVKEEEAIEGLGALFG). Acidic residues predominate over residues 83–98 (KEEEEEEEEVKEEEAI).

This sequence belongs to the eukaryotic ribosomal protein P1/P2 family. As to quaternary structure, part of the 50S ribosomal subunit. Homodimer, it forms part of the ribosomal stalk which helps the ribosome interact with GTP-bound translation factors. Forms a heptameric uL10/P0(P1)2(P1)2(P1)2 complex, where uL10/P0 forms an elongated spine to which the P1 dimers bind in a sequential fashion.

Functionally, forms part of the ribosomal stalk, playing a central role in the interaction of the ribosome with GTP-bound translation factors. The protein is Large ribosomal subunit protein P1 of Archaeoglobus fulgidus (strain ATCC 49558 / DSM 4304 / JCM 9628 / NBRC 100126 / VC-16).